Consider the following 272-residue polypeptide: Glutamate racemase (272 aa).

Substrate contacts are provided by residues D16–S17 and Y48–G49. C79 acts as the Proton donor/acceptor in catalysis. Residue N80–T81 coordinates substrate. The active-site Proton donor/acceptor is the C191. A substrate-binding site is contributed by T192–H193.

Belongs to the aspartate/glutamate racemases family.

It catalyses the reaction L-glutamate = D-glutamate. It functions in the pathway cell wall biogenesis; peptidoglycan biosynthesis. Functionally, provides the (R)-glutamate required for cell wall biosynthesis. The sequence is that of Glutamate racemase from Chlorobium phaeobacteroides (strain DSM 266 / SMG 266 / 2430).